A 288-amino-acid polypeptide reads, in one-letter code: Bifunctional protein FolD (288 aa).

NADP(+) is bound by residues 164–166 (GTS) and isoleucine 230.

This sequence belongs to the tetrahydrofolate dehydrogenase/cyclohydrolase family. Homodimer.

It carries out the reaction (6R)-5,10-methylene-5,6,7,8-tetrahydrofolate + NADP(+) = (6R)-5,10-methenyltetrahydrofolate + NADPH. The enzyme catalyses (6R)-5,10-methenyltetrahydrofolate + H2O = (6R)-10-formyltetrahydrofolate + H(+). Its pathway is one-carbon metabolism; tetrahydrofolate interconversion. Catalyzes the oxidation of 5,10-methylenetetrahydrofolate to 5,10-methenyltetrahydrofolate and then the hydrolysis of 5,10-methenyltetrahydrofolate to 10-formyltetrahydrofolate. The protein is Bifunctional protein FolD of Mycoplasma mycoides subsp. mycoides SC (strain CCUG 32753 / NCTC 10114 / PG1).